The sequence spans 426 residues: Serine--tRNA ligase (426 aa).

L-serine is bound at residue 232-234; it reads TAE. 263–265 contacts ATP; sequence RSE. Position 286 (E286) interacts with L-serine. 350–353 contributes to the ATP binding site; the sequence is EISS. S385 is an L-serine binding site.

The protein belongs to the class-II aminoacyl-tRNA synthetase family. Type-1 seryl-tRNA synthetase subfamily. Homodimer. The tRNA molecule binds across the dimer.

The protein localises to the cytoplasm. The catalysed reaction is tRNA(Ser) + L-serine + ATP = L-seryl-tRNA(Ser) + AMP + diphosphate + H(+). It catalyses the reaction tRNA(Sec) + L-serine + ATP = L-seryl-tRNA(Sec) + AMP + diphosphate + H(+). Its pathway is aminoacyl-tRNA biosynthesis; selenocysteinyl-tRNA(Sec) biosynthesis; L-seryl-tRNA(Sec) from L-serine and tRNA(Sec): step 1/1. Catalyzes the attachment of serine to tRNA(Ser). Is also able to aminoacylate tRNA(Sec) with serine, to form the misacylated tRNA L-seryl-tRNA(Sec), which will be further converted into selenocysteinyl-tRNA(Sec). This chain is Serine--tRNA ligase, found in Pediococcus pentosaceus (strain ATCC 25745 / CCUG 21536 / LMG 10740 / 183-1w).